The chain runs to 281 residues: 3-methyl-2-oxobutanoate hydroxymethyltransferase (281 aa).

Residues D49 and D88 each coordinate Mg(2+). 3-methyl-2-oxobutanoate is bound by residues 49–50 (DS), D88, and K118. E120 contacts Mg(2+). E186 acts as the Proton acceptor in catalysis.

Belongs to the PanB family. As to quaternary structure, homodecamer; pentamer of dimers. The cofactor is Mg(2+).

The protein resides in the cytoplasm. It catalyses the reaction 3-methyl-2-oxobutanoate + (6R)-5,10-methylene-5,6,7,8-tetrahydrofolate + H2O = 2-dehydropantoate + (6S)-5,6,7,8-tetrahydrofolate. Its pathway is cofactor biosynthesis; (R)-pantothenate biosynthesis; (R)-pantoate from 3-methyl-2-oxobutanoate: step 1/2. Functionally, catalyzes the reversible reaction in which hydroxymethyl group from 5,10-methylenetetrahydrofolate is transferred onto alpha-ketoisovalerate to form ketopantoate. In Chelativorans sp. (strain BNC1), this protein is 3-methyl-2-oxobutanoate hydroxymethyltransferase.